The primary structure comprises 220 residues: Small ribosomal subunit protein uS3 (220 aa).

Residues 24-93 (IKEFLEYRLS…NPQIDVIDVS (70 aa)) form the KH type-2 domain.

This sequence belongs to the universal ribosomal protein uS3 family. Part of the 30S ribosomal subunit.

Binds the lower part of the 30S subunit head. The chain is Small ribosomal subunit protein uS3 from Pyrobaculum arsenaticum (strain DSM 13514 / JCM 11321 / PZ6).